The primary structure comprises 735 residues: Capsid protein VP1 (735 aa).

Residues 22 to 44 (WWKLKPGPPPPKPAERHKDDSRG) form a disordered region. Over residues 34–43 (PAERHKDDSR) the composition is skewed to basic and acidic residues. The phospholipase A2-like stretch occupies residues 52–97 (YLGPFNGLDKGEPVNEADAAALEHDKAYDRQLDSGDNPYLKYNHAD). The tract at residues 136-224 (VKTAPGKKRP…NEGADGVGNS (89 aa)) is disordered. The segment covering 184–194 (DPQPLGQPPAA) has biased composition (pro residues).

The protein belongs to the parvoviridae capsid protein family.

The protein localises to the virion. It is found in the host nucleus. Its subcellular location is the host nucleolus. Its function is as follows. Capsid protein self-assembles to form an icosahedral capsid with a T=1 symmetry, about 22 nm in diameter, and consisting of 60 copies of three size variants of the capsid protein VP1, VP2 and VP3 which differ in their N-terminus. The capsid encapsulates the genomic ssDNA. Binds to host cell heparan sulfate and uses host ITGA5-ITGB1 as coreceptor on the cell surface to provide virion attachment to target cell. This attachment induces virion internalization predominantly through clathrin-dependent endocytosis. Binding to the host receptor also induces capsid rearrangements leading to surface exposure of VP1 N-terminus, specifically its phospholipase A2-like region and putative nuclear localization signal(s). VP1 N-terminus might serve as a lipolytic enzyme to breach the endosomal membrane during entry into host cell and might contribute to virus transport to the nucleus. In Adeno-associated virus 2 (isolate Srivastava/1982) (AAV-2), this protein is Capsid protein VP1 (VP1).